We begin with the raw amino-acid sequence, 436 residues long: MGKPKKANVATIKNVNLEKQITEGRVAKNKNKDKVKLRAEESANIDARSSQKILAAAKLQQLELDEENFPSLVTVKKVNFSLNDGHVKEDEEVNETDLMADLDMDEDDVAAFERFQQPAQEGKRTLHLSKMIMQKIQEKEADIHTKISDEGSLKIEEIDPKVKEMYEGVRDVLKRYRSGKIPKAFKIIPKLRNWEQILFITEPHNWSAAAMFQGTRIFCSVLSQAMAQRFYNLVLLPRVRDDLCEYKKLNMHLYNALKRALFKPAAFMKGIILPLLEGGDCTLREAIIFGSVVARSSIPVLHSSACLLKICEMAYSGANSIFIRYFLDKRYALPYRVVDAAVFHFLRFENDKRELPVLWHQSLLTFAQRYKNDISSEQRDALLQLLKKKSHFKITPDVRRELQAASCRDVEMMETDNGLAGQPAKMYTDADVEYEG.

A Phosphothreonine modification is found at T145. S148 and S152 each carry phosphoserine.

This sequence belongs to the bystin family.

The protein resides in the nucleus. Its subcellular location is the nucleolus. Its function is as follows. Required for processing of 20S pre-rRNA precursor and biogenesis of 40S ribosomal subunits. The sequence is that of Bystin (bys) from Drosophila melanogaster (Fruit fly).